Reading from the N-terminus, the 144-residue chain is Prefoldin subunit alpha (144 aa).

Belongs to the prefoldin alpha subunit family. Heterohexamer of two alpha and four beta subunits.

It is found in the cytoplasm. Molecular chaperone capable of stabilizing a range of proteins. Seems to fulfill an ATP-independent, HSP70-like function in archaeal de novo protein folding. This chain is Prefoldin subunit alpha, found in Metallosphaera sedula (strain ATCC 51363 / DSM 5348 / JCM 9185 / NBRC 15509 / TH2).